The primary structure comprises 523 residues: Mitochondrial distribution and morphology protein 12 (523 aa).

The SMP-LTD domain occupies 1 to 483 (MSFDINWEKL…WPSWICVDMA (483 aa)). Over residues 108–117 (HEADIINDHD) the composition is skewed to basic and acidic residues. Disordered stretches follow at residues 108-160 (HEAD…QYDE), 178-213 (SASTPKRTSPQRPPLISPRGEVTQQTLSKPKEPFQS), 270-313 (KTKE…NAKN), and 483-523 (AEND…KKED). 2 stretches are compositionally biased toward acidic residues: residues 118–140 (YGDEDDIDDDYDNDSDDYDDDEN) and 148–158 (EDEENEESSQY). Polar residues-rich tracts occupy residues 178-187 (SASTPKRTSP) and 277-288 (SGDQQQGKQTGK). Over residues 289–313 (ANEKGQKHKHEHEEEQGSDKQNAKN) the composition is skewed to basic and acidic residues. Acidic residues predominate over residues 483–501 (AENDDEEEDDDDDDHDEDN). The span at 502–523 (EGRGRMRDTGDVDVRDHDKKED) shows a compositional bias: basic and acidic residues.

Belongs to the MDM12 family. As to quaternary structure, component of the ER-mitochondria encounter structure (ERMES) or MDM complex, composed of MMM1, MDM10, MDM12 and MDM34. An MMM1 homodimer associates with one molecule of MDM12 on each side in a pairwise head-to-tail manner, and the SMP-LTD domains of MMM1 and MDM12 generate a continuous hydrophobic tunnel for phospholipid trafficking.

It is found in the mitochondrion outer membrane. Its subcellular location is the endoplasmic reticulum membrane. Functionally, component of the ERMES/MDM complex, which serves as a molecular tether to connect the endoplasmic reticulum (ER) and mitochondria. Components of this complex are involved in the control of mitochondrial shape and protein biogenesis, and function in nonvesicular lipid trafficking between the ER and mitochondria. MDM12 is required for the interaction of the ER-resident membrane protein MMM1 and the outer mitochondrial membrane-resident beta-barrel protein MDM10. The MDM12-MMM1 subcomplex functions in the major beta-barrel assembly pathway that is responsible for biogenesis of all mitochondrial outer membrane beta-barrel proteins, and acts in a late step after the SAM complex. The MDM10-MDM12-MMM1 subcomplex further acts in the TOM40-specific pathway after the action of the MDM12-MMM1 complex. Essential for establishing and maintaining the structure of mitochondria and maintenance of mtDNA nucleoids. This Lodderomyces elongisporus (strain ATCC 11503 / CBS 2605 / JCM 1781 / NBRC 1676 / NRRL YB-4239) (Yeast) protein is Mitochondrial distribution and morphology protein 12.